The chain runs to 181 residues: Lysozyme C (181 aa).

An N-terminal signal peptide occupies residues methionine 1–glycine 19. Positions leucine 139–glutamate 181 are excised as a propeptide.

It belongs to the dictyostelium lysozyme family. Contains six disulfide bonds.

Its subcellular location is the cytoplasmic vesicle lumen. The catalysed reaction is Hydrolysis of (1-&gt;4)-beta-linkages between N-acetylmuramic acid and N-acetyl-D-glucosamine residues in a peptidoglycan and between N-acetyl-D-glucosamine residues in chitodextrins.. In terms of biological role, has antibacterial activity. This is Lysozyme C (alyC) from Dictyostelium discoideum (Social amoeba).